A 90-amino-acid polypeptide reads, in one-letter code: Large ribosomal subunit protein bL27 (90 aa).

Positions 1 to 20 are disordered; sequence MAHKKAGGSSRNGRDSAGKR.

This sequence belongs to the bacterial ribosomal protein bL27 family.

This is Large ribosomal subunit protein bL27 from Rhodopseudomonas palustris (strain ATCC BAA-98 / CGA009).